Consider the following 328-residue polypeptide: Fructose-1,6-bisphosphatase class 1 (328 aa).

Mg(2+) contacts are provided by E89, D110, L112, and D113. Substrate is bound by residues N206, Y234, 252–254, and K264; that span reads YLY. Position 270 (E270) interacts with Mg(2+).

The protein belongs to the FBPase class 1 family. As to quaternary structure, homotetramer. It depends on Mg(2+) as a cofactor.

The protein resides in the cytoplasm. The catalysed reaction is beta-D-fructose 1,6-bisphosphate + H2O = beta-D-fructose 6-phosphate + phosphate. Its pathway is carbohydrate biosynthesis; gluconeogenesis. The chain is Fructose-1,6-bisphosphatase class 1 from Wigglesworthia glossinidia brevipalpis.